The following is a 919-amino-acid chain: 2-oxoadipate dehydrogenase complex component E1 (919 aa).

Lys183 and Lys188 each carry N6-succinyllysine. The tract at residues 299–320 is disordered; that stretch reads GKTRGRQQSRQDGDYSPDNSAQ. N6-succinyllysine occurs at positions 800 and 818.

The protein belongs to the alpha-ketoglutarate dehydrogenase family. In terms of assembly, the 2-oxoadipate dehydrogenase complex is composed of OADH (2-oxoadipate dehydrogenase; E1a), DLST (dihydrolipoamide succinyltransferase; E2) and DLD (dihydrolipoamide dehydrogenase; E3). E1a functional unit is a dimer. Interacts with DLST. Thiamine diphosphate serves as cofactor.

Its subcellular location is the mitochondrion. The catalysed reaction is N(6)-[(R)-lipoyl]-L-lysyl-[protein] + 2-oxoadipate + H(+) = N(6)-[(R)-S(8)-glutaryldihydrolipoyl]-L-lysyl-[protein] + CO2. Its pathway is amino-acid degradation. In terms of biological role, 2-oxoadipate dehydrogenase (E1a) component of the 2-oxoadipate dehydrogenase complex (OADHC). Participates in the first step, rate limiting for the overall conversion of 2-oxoadipate (alpha-ketoadipate) to glutaryl-CoA and CO(2) catalyzed by the whole OADHC. Catalyzes the irreversible decarboxylation of 2-oxoadipate via the thiamine diphosphate (ThDP) cofactor and subsequent transfer of the decarboxylated acyl intermediate on an oxidized dihydrolipoyl group that is covalently amidated to the E2 enzyme (dihydrolipoyllysine-residue succinyltransferase or DLST). Can catalyze the decarboxylation of 2-oxoglutarate in vitro, but at a much lower rate than 2-oxoadipate. Responsible for the last step of L-lysine, L-hydroxylysine and L-tryptophan catabolism with the common product being 2-oxoadipate. This chain is 2-oxoadipate dehydrogenase complex component E1 (DHTKD1), found in Homo sapiens (Human).